We begin with the raw amino-acid sequence, 400 residues long: Na(+)/H(+) antiporter NhaA 1 (400 aa).

Helical transmembrane passes span 25 to 45, 67 to 87, 103 to 123, 130 to 150, 159 to 179, 184 to 204, 213 to 233, 264 to 284, 303 to 323, 339 to 359, and 372 to 392; these read IVLM…FSSM, ILHW…GMEI, ILPV…YALF, IIGW…ILSL, IIIF…IVIA, SEIS…IILA, WLYI…GVHE, VLTP…NSGI, IIFG…YILV, LYGA…VSSL, and ISII…FKII.

The protein belongs to the NhaA Na(+)/H(+) (TC 2.A.33) antiporter family.

It localises to the cell membrane. The catalysed reaction is Na(+)(in) + 2 H(+)(out) = Na(+)(out) + 2 H(+)(in). Its function is as follows. Na(+)/H(+) antiporter that extrudes sodium in exchange for external protons. The chain is Na(+)/H(+) antiporter NhaA 1 from Clostridium beijerinckii (strain ATCC 51743 / NCIMB 8052) (Clostridium acetobutylicum).